The primary structure comprises 200 residues: NAD(P)H-quinone oxidoreductase subunit 6, chloroplastic (200 aa).

5 helical membrane-spanning segments follow: residues 13 to 33, 35 to 55, 64 to 84, 101 to 121, and 156 to 176; these read VFFV…VFLT, IVYS…LYLL, AQIL…VMLI, TITL…ILSI, and LLPF…AITI.

It belongs to the complex I subunit 6 family. In terms of assembly, NDH is composed of at least 16 different subunits, 5 of which are encoded in the nucleus.

It localises to the plastid. It is found in the chloroplast thylakoid membrane. The enzyme catalyses a plastoquinone + NADH + (n+1) H(+)(in) = a plastoquinol + NAD(+) + n H(+)(out). It carries out the reaction a plastoquinone + NADPH + (n+1) H(+)(in) = a plastoquinol + NADP(+) + n H(+)(out). In terms of biological role, NDH shuttles electrons from NAD(P)H:plastoquinone, via FMN and iron-sulfur (Fe-S) centers, to quinones in the photosynthetic chain and possibly in a chloroplast respiratory chain. The immediate electron acceptor for the enzyme in this species is believed to be plastoquinone. Couples the redox reaction to proton translocation, and thus conserves the redox energy in a proton gradient. This chain is NAD(P)H-quinone oxidoreductase subunit 6, chloroplastic (ndhG), found in Anthoceros angustus (Hornwort).